The primary structure comprises 282 residues: Shikimate dehydrogenase (NADP(+)) (282 aa).

Shikimate-binding positions include 15–17 and Thr62; that span reads SKS. The Proton acceptor role is filled by Lys66. Residues Asn87 and Asp103 each contribute to the shikimate site. NADP(+) contacts are provided by residues 127–131, 151–156, and Met220; these read GAGGA and NRTHTK. Tyr222 contributes to the shikimate binding site. Gly244 serves as a coordination point for NADP(+).

This sequence belongs to the shikimate dehydrogenase family. Homodimer.

It catalyses the reaction shikimate + NADP(+) = 3-dehydroshikimate + NADPH + H(+). It functions in the pathway metabolic intermediate biosynthesis; chorismate biosynthesis; chorismate from D-erythrose 4-phosphate and phosphoenolpyruvate: step 4/7. Functionally, involved in the biosynthesis of the chorismate, which leads to the biosynthesis of aromatic amino acids. Catalyzes the reversible NADPH linked reduction of 3-dehydroshikimate (DHSA) to yield shikimate (SA). This Shewanella baltica (strain OS185) protein is Shikimate dehydrogenase (NADP(+)).